A 196-amino-acid polypeptide reads, in one-letter code: ATP-dependent Clp protease proteolytic subunit (196 aa).

Residue Ser101 is the Nucleophile of the active site. His126 is an active-site residue.

Belongs to the peptidase S14 family. In terms of assembly, component of the chloroplastic Clp protease core complex.

The protein localises to the plastid. It localises to the chloroplast stroma. It carries out the reaction Hydrolysis of proteins to small peptides in the presence of ATP and magnesium. alpha-casein is the usual test substrate. In the absence of ATP, only oligopeptides shorter than five residues are hydrolyzed (such as succinyl-Leu-Tyr-|-NHMec, and Leu-Tyr-Leu-|-Tyr-Trp, in which cleavage of the -Tyr-|-Leu- and -Tyr-|-Trp bonds also occurs).. Functionally, cleaves peptides in various proteins in a process that requires ATP hydrolysis. Has a chymotrypsin-like activity. Plays a major role in the degradation of misfolded proteins. The protein is ATP-dependent Clp protease proteolytic subunit of Gossypium barbadense (Sea Island cotton).